A 504-amino-acid chain; its full sequence is 2,3-bisphosphoglycerate-independent phosphoglycerate mutase (504 aa).

Asp9 and Ser59 together coordinate Mn(2+). Ser59 acts as the Phosphoserine intermediate in catalysis. Residues His120, 149-150 (RD), Arg181, Arg187, 253-256 (RPDR), and Lys326 contribute to the substrate site. Mn(2+) is bound by residues Asp393, His397, Asp434, His435, and His451.

This sequence belongs to the BPG-independent phosphoglycerate mutase family. Mn(2+) is required as a cofactor.

The enzyme catalyses (2R)-2-phosphoglycerate = (2R)-3-phosphoglycerate. Its pathway is carbohydrate degradation; glycolysis; pyruvate from D-glyceraldehyde 3-phosphate: step 3/5. Functionally, catalyzes the interconversion of 2-phosphoglycerate and 3-phosphoglycerate. The sequence is that of 2,3-bisphosphoglycerate-independent phosphoglycerate mutase from Haloquadratum walsbyi (strain DSM 16790 / HBSQ001).